Reading from the N-terminus, the 464-residue chain is tRNA modification GTPase MnmE (464 aa).

The (6S)-5-formyl-5,6,7,8-tetrahydrofolate site is built by arginine 27, glutamate 90, and lysine 129. One can recognise a TrmE-type G domain in the interval 222-384; that stretch reads GVTLVLAGSV…LYDRIRSFIA (163 aa). Residues 232–237, 251–257, and 276–279 contribute to the GTP site; these read NVGKSS, SSYAGTT, and DTAG. Serine 236 provides a ligand contact to Mg(2+). Serine 251 contacts K(+). Threonine 257 serves as a coordination point for Mg(2+). Lysine 464 contributes to the (6S)-5-formyl-5,6,7,8-tetrahydrofolate binding site.

The protein belongs to the TRAFAC class TrmE-Era-EngA-EngB-Septin-like GTPase superfamily. TrmE GTPase family. Homodimer. Heterotetramer of two MnmE and two MnmG subunits. Requires K(+) as cofactor.

Its subcellular location is the cytoplasm. Functionally, exhibits a very high intrinsic GTPase hydrolysis rate. Involved in the addition of a carboxymethylaminomethyl (cmnm) group at the wobble position (U34) of certain tRNAs, forming tRNA-cmnm(5)s(2)U34. The polypeptide is tRNA modification GTPase MnmE (Borrelia recurrentis (strain A1)).